The following is a 255-amino-acid chain: Formate hydrogenlyase subunit 7 (255 aa).

4 residues coordinate [4Fe-4S] cluster: Cys-45, Cys-51, Cys-115, and Cys-145.

It belongs to the complex I 20 kDa subunit family. In terms of assembly, FHL comprises of a formate dehydrogenase, unidentified electron carriers and a hydrogenase (isoenzyme 3). In this non-energy conserving pathway molecular hydrogen and carbodioxide from formate are released. Requires [4Fe-4S] cluster as cofactor.

The polypeptide is Formate hydrogenlyase subunit 7 (hycG) (Escherichia coli (strain K12)).